Consider the following 561-residue polypeptide: Potassium-transporting ATPase potassium-binding subunit (561 aa).

Transmembrane regions (helical) follow at residues isoleucine 4–isoleucine 24, alanine 65–leucine 85, isoleucine 133–valine 153, leucine 177–valine 197, phenylalanine 253–phenylalanine 273, alanine 285–glutamate 305, glycine 380–glycine 400, methionine 417–valine 437, methionine 484–leucine 504, and phenylalanine 528–leucine 548.

This sequence belongs to the KdpA family. In terms of assembly, the system is composed of three essential subunits: KdpA, KdpB and KdpC.

It localises to the cell membrane. Its function is as follows. Part of the high-affinity ATP-driven potassium transport (or Kdp) system, which catalyzes the hydrolysis of ATP coupled with the electrogenic transport of potassium into the cytoplasm. This subunit binds the extracellular potassium ions and delivers the ions to the membrane domain of KdpB through an intramembrane tunnel. The sequence is that of Potassium-transporting ATPase potassium-binding subunit from Listeria monocytogenes serotype 4a (strain HCC23).